A 328-amino-acid chain; its full sequence is GMP reductase (328 aa).

C176 serves as the catalytic Thioimidate intermediate. An NADP(+)-binding site is contributed by I205–V228.

Belongs to the IMPDH/GMPR family. GuaC type 2 subfamily.

It catalyses the reaction IMP + NH4(+) + NADP(+) = GMP + NADPH + 2 H(+). Catalyzes the irreversible NADPH-dependent deamination of GMP to IMP. It functions in the conversion of nucleobase, nucleoside and nucleotide derivatives of G to A nucleotides, and in maintaining the intracellular balance of A and G nucleotides. This is GMP reductase from Streptococcus pneumoniae (strain Hungary19A-6).